The chain runs to 331 residues: 3'-5' exonuclease (331 aa).

The disordered stretch occupies residues 27–92 (ERVKQTNAAK…EDGPASPEKE (66 aa)). Polar residues predominate over residues 31–43 (QTNAAKKQIATNN). A compositionally biased stretch (basic and acidic residues) spans 47–67 (KNQDTPEMIKDKENAESENPP). Phosphoserine is present on residues Ser-80 and Ser-88. The 173-residue stretch at 118-290 (SADEVMQWVE…IGQVIYREIE (173 aa)) folds into the 3'-5' exonuclease domain. 3 residues coordinate Mg(2+): Asp-140, Glu-142, and Asp-278.

Belongs to the WRNexo family.

It is found in the nucleus. Has exonuclease activity on both single-stranded and duplex templates bearing overhangs, but not blunt ended duplex DNA, and cleaves in a 3'-5' direction. Essential for the formation of DNA replication focal centers. Has an important role in maintaining genome stability. The sequence is that of 3'-5' exonuclease from Drosophila grimshawi (Hawaiian fruit fly).